Here is a 188-residue protein sequence, read N- to C-terminus: Holliday junction branch migration complex subunit RuvA (188 aa).

Positions 1-64 are domain I; that stretch reads MIAGISGRVL…QDGITLYGFS (64 aa). Residues 65–143 form a domain II region; that stretch reads NEMKKELFLS…SAGIKDMRIY (79 aa). Tyr143 is a region of interest (flexible linker). A domain III region spans residues 143-186; that stretch reads YHESLEALVSLGYPEKQAREAVKQVYREGMKTSELIKEALKFLS.

It belongs to the RuvA family. As to quaternary structure, homotetramer. Forms an RuvA(8)-RuvB(12)-Holliday junction (HJ) complex. HJ DNA is sandwiched between 2 RuvA tetramers; dsDNA enters through RuvA and exits via RuvB. An RuvB hexamer assembles on each DNA strand where it exits the tetramer. Each RuvB hexamer is contacted by two RuvA subunits (via domain III) on 2 adjacent RuvB subunits; this complex drives branch migration. In the full resolvosome a probable DNA-RuvA(4)-RuvB(12)-RuvC(2) complex forms which resolves the HJ.

It is found in the cytoplasm. In terms of biological role, the RuvA-RuvB-RuvC complex processes Holliday junction (HJ) DNA during genetic recombination and DNA repair, while the RuvA-RuvB complex plays an important role in the rescue of blocked DNA replication forks via replication fork reversal (RFR). RuvA specifically binds to HJ cruciform DNA, conferring on it an open structure. The RuvB hexamer acts as an ATP-dependent pump, pulling dsDNA into and through the RuvAB complex. HJ branch migration allows RuvC to scan DNA until it finds its consensus sequence, where it cleaves and resolves the cruciform DNA. Promotes Holliday junction (HJ) branch migration in conjunction with RuvB. This chain is Holliday junction branch migration complex subunit RuvA, found in Thermotoga maritima (strain ATCC 43589 / DSM 3109 / JCM 10099 / NBRC 100826 / MSB8).